Consider the following 211-residue polypeptide: Peroxiredoxin (211 aa).

The Thioredoxin domain occupies 2 to 156 (PLLGDDFPEL…ILRAVKVLQI (155 aa)). The active-site Cysteine sulfenic acid (-SOH) intermediate is cysteine 44. Arginine 119 contributes to the substrate binding site. Cysteines 199 and 205 form a disulfide.

Belongs to the peroxiredoxin family. Prx6 subfamily. In terms of assembly, homodecamer. Pentamer of dimers that assemble into a ring structure.

The protein localises to the cytoplasm. The enzyme catalyses a hydroperoxide + [thioredoxin]-dithiol = an alcohol + [thioredoxin]-disulfide + H2O. Its function is as follows. Thiol-specific peroxidase that catalyzes the reduction of hydrogen peroxide and organic hydroperoxides to water and alcohols, respectively. Plays a role in cell protection against oxidative stress by detoxifying peroxides. In Chlorobaculum tepidum (strain ATCC 49652 / DSM 12025 / NBRC 103806 / TLS) (Chlorobium tepidum), this protein is Peroxiredoxin.